The chain runs to 228 residues: Large ribosomal subunit protein bL25 (228 aa).

A disordered region spans residues 196–228 (EEAAVAEAQSAESAEGKAEAEAEATNEKNKSEA). Residues 209–228 (AEGKAEAEAEATNEKNKSEA) are compositionally biased toward basic and acidic residues.

It belongs to the bacterial ribosomal protein bL25 family. CTC subfamily. Part of the 50S ribosomal subunit; part of the 5S rRNA/L5/L18/L25 subcomplex. Contacts the 5S rRNA. Binds to the 5S rRNA independently of L5 and L18.

In terms of biological role, this is one of the proteins that binds to the 5S RNA in the ribosome where it forms part of the central protuberance. The sequence is that of Large ribosomal subunit protein bL25 from Methylorubrum extorquens (strain PA1) (Methylobacterium extorquens).